A 336-amino-acid polypeptide reads, in one-letter code: Galactinol synthase 6 (336 aa).

Residue lysine 106 is part of the active site. The Mn(2+) site is built by aspartate 122, aspartate 124, and histidine 260.

It belongs to the glycosyltransferase 8 family. Galactosyltransferase subfamily. Requires a divalent metal cation as cofactor.

It is found in the cytoplasm. The enzyme catalyses myo-inositol + UDP-alpha-D-galactose = alpha-D-galactosyl-(1-&gt;3)-1D-myo-inositol + UDP + H(+). Functionally, galactinol synthase involved in the biosynthesis of raffinose family oligosaccharides (RFOs) that function as osmoprotectants. May promote plant stress tolerance. This Arabidopsis thaliana (Mouse-ear cress) protein is Galactinol synthase 6 (GOLS6).